Here is a 462-residue protein sequence, read N- to C-terminus: MSLRFSGGSRHVGIQSGSLRPPSGGAGFAGSSVAGGSVAGSGFSWALGGTLGSAPGGSHATGALGNVSGVCFIGSEGGLLSGNEKVTMQNLNNRLASYLDNVKALEEANSELERKIKTWHEKYGPGSCRGLDRDYSKYHLTIEDLKSKIISSTAANANIILQIDNARLAADDFRLKYENELTLHQNVEADINGLRRVLDELTLCRTDQELQYESLSEEMTYLKKNHEEEMKVLQCAAGGNVNVEMNAAPGVDLTVLLNNMRAEYEALAEQNRRDAEAWFQEKSATLQQQISNDLGAATSARTELTELKRSLQTLEIELQSLSATKHSLECSLAETEGNYCSQLAQIQAQISALEEQLHQVRTETEGQKLEHEQLLDIKAHLEKEIETYCRLIDGDENSCSVSKGFESGTSGNSPKDVSKTTLVKTVVEEIDQRGKVLSSRIHSIEEKMSKMSNGKAEQRVPF.

The disordered stretch occupies residues 1–26; that stretch reads MSLRFSGGSRHVGIQSGSLRPPSGGA. Residues 1 to 83 are head; the sequence is MSLRFSGGSR…GSEGGLLSGN (83 aa). A coil 1A region spans residues 84 to 119; that stretch reads EKVTMQNLNNRLASYLDNVKALEEANSELERKIKTW. The IF rod domain occupies 84-399; sequence EKVTMQNLNN…RLIDGDENSC (316 aa). The linker 1 stretch occupies residues 120–141; the sequence is HEKYGPGSCRGLDRDYSKYHLT. Positions 142 to 233 are coil 1B; sequence IEDLKSKIIS…KNHEEEMKVL (92 aa). The tract at residues 234 to 256 is linker 12; that stretch reads QCAAGGNVNVEMNAAPGVDLTVL. Residues 257-395 are coil 2; it reads LNNMRAEYEA…ETYCRLIDGD (139 aa). The tail stretch occupies residues 396–462; the sequence is ENSCSVSKGF…NGKAEQRVPF (67 aa).

It belongs to the intermediate filament family. As to quaternary structure, heterotetramer of two type I and two type II keratins. In terms of tissue distribution, in the hair follicle and bulb, uniformly expressed in all three layers of the inner root sheath (the Henle layer, the Huxley layer and the cuticle) and observed in matrix cells (at protein level).

It is found in the cytoplasm. Its function is as follows. Essential for the proper assembly of types I and II keratin protein complexes and the formation of keratin intermediate filaments in the inner root sheath (irs). In Mus musculus (Mouse), this protein is Keratin, type I cytoskeletal 28.